Reading from the N-terminus, the 199-residue chain is MAEEQVLNTHNASILLSAANKSHYPQDDLPEIALAGRSNVGKSSFINTILGRKNLARTSSKPGKTQLLNFFNIDDKLRFVDVPGYGYAKVSKSERAKWGKMIEEYLTSRDNLRAVVSLVDLRHAPSKEDIQMYDFLKYYDIPVIVVATKADKIPHGKWNKHESVVKKALNFDKSDTFIVFSSVERIGIDDSWDAILEQV.

The 172-residue stretch at 28–199 (DLPEIALAGR…DSWDAILEQV (172 aa)) folds into the EngB-type G domain. GTP contacts are provided by residues 36 to 43 (GRSNVGKS), 63 to 67 (GKTQL), 81 to 84 (DVPG), 148 to 151 (TKAD), and 180 to 182 (FSS). Positions 43 and 65 each coordinate Mg(2+).

Belongs to the TRAFAC class TrmE-Era-EngA-EngB-Septin-like GTPase superfamily. EngB GTPase family. Requires Mg(2+) as cofactor.

Necessary for normal cell division and for the maintenance of normal septation. This Streptococcus pyogenes serotype M3 (strain SSI-1) protein is Probable GTP-binding protein EngB.